The sequence spans 405 residues: F-box/kelch-repeat protein At2g43445 (405 aa).

In terms of domain architecture, F-box spans 7 to 53 (NTNSIYIVSELLEEIFLGLPLKSILKFKTVSKQWRSILESNLFVERR). 2 Kelch repeats span residues 146-197 (RDKV…CVNG) and 356-400 (THHD…VVGY).

The protein is F-box/kelch-repeat protein At2g43445 of Arabidopsis thaliana (Mouse-ear cress).